A 201-amino-acid polypeptide reads, in one-letter code: Orotate phosphoribosyltransferase (201 aa).

113 to 121 (EDIITTGKS) contacts 5-phospho-alpha-D-ribose 1-diphosphate. Orotate contacts are provided by threonine 117 and arginine 145.

Belongs to the purine/pyrimidine phosphoribosyltransferase family. PyrE subfamily. In terms of assembly, homodimer. Mg(2+) is required as a cofactor.

It catalyses the reaction orotidine 5'-phosphate + diphosphate = orotate + 5-phospho-alpha-D-ribose 1-diphosphate. It functions in the pathway pyrimidine metabolism; UMP biosynthesis via de novo pathway; UMP from orotate: step 1/2. Functionally, catalyzes the transfer of a ribosyl phosphate group from 5-phosphoribose 1-diphosphate to orotate, leading to the formation of orotidine monophosphate (OMP). This is Orotate phosphoribosyltransferase from Helicobacter pylori (strain G27).